A 526-amino-acid polypeptide reads, in one-letter code: Sterol 14-alpha demethylase CYP51A (526 aa).

Residues 27–47 traverse the membrane as a helical segment; the sequence is IGFAVFLVLSVVLNVLNQLLF. Position 123 (Tyr123) interacts with lanosterol. A heme-binding site is contributed by Cys470.

The protein belongs to the cytochrome P450 family. Requires heme as cofactor.

It localises to the endoplasmic reticulum membrane. The catalysed reaction is a 14alpha-methyl steroid + 3 reduced [NADPH--hemoprotein reductase] + 3 O2 = a Delta(14) steroid + formate + 3 oxidized [NADPH--hemoprotein reductase] + 4 H2O + 4 H(+). The enzyme catalyses a 14alpha-methyl steroid + reduced [NADPH--hemoprotein reductase] + O2 = a 14alpha-hydroxymethyl steroid + oxidized [NADPH--hemoprotein reductase] + H2O + H(+). It carries out the reaction a 14alpha-hydroxymethyl steroid + reduced [NADPH--hemoprotein reductase] + O2 = a 14alpha-formyl steroid + oxidized [NADPH--hemoprotein reductase] + 2 H2O + H(+). It catalyses the reaction a 14alpha-formyl steroid + reduced [NADPH--hemoprotein reductase] + O2 = a Delta(14) steroid + formate + oxidized [NADPH--hemoprotein reductase] + H2O + 2 H(+). The catalysed reaction is lanosterol + 3 reduced [NADPH--hemoprotein reductase] + 3 O2 = 4,4-dimethyl-5alpha-cholesta-8,14,24-trien-3beta-ol + formate + 3 oxidized [NADPH--hemoprotein reductase] + 4 H2O + 4 H(+). The enzyme catalyses lanosterol + reduced [NADPH--hemoprotein reductase] + O2 = 32-hydroxylanosterol + oxidized [NADPH--hemoprotein reductase] + H2O + H(+). It carries out the reaction 32-hydroxylanosterol + reduced [NADPH--hemoprotein reductase] + O2 = 32-oxolanosterol + oxidized [NADPH--hemoprotein reductase] + 2 H2O + H(+). It catalyses the reaction 32-oxolanosterol + reduced [NADPH--hemoprotein reductase] + O2 = 4,4-dimethyl-5alpha-cholesta-8,14,24-trien-3beta-ol + formate + oxidized [NADPH--hemoprotein reductase] + H2O + 2 H(+). The catalysed reaction is eburicol + 3 reduced [NADPH--hemoprotein reductase] + 3 O2 = 14-demethyleburicol + formate + 3 oxidized [NADPH--hemoprotein reductase] + 4 H2O + 4 H(+). The enzyme catalyses eburicol + reduced [NADPH--hemoprotein reductase] + O2 = 32-hydroxyeburicol + oxidized [NADPH--hemoprotein reductase] + H2O + H(+). It carries out the reaction 32-hydroxyeburicol + reduced [NADPH--hemoprotein reductase] + O2 = 32-oxoeburicol + oxidized [NADPH--hemoprotein reductase] + 2 H2O + H(+). It catalyses the reaction 32-oxoeburicol + reduced [NADPH--hemoprotein reductase] + O2 = 14-demethyleburicol + formate + oxidized [NADPH--hemoprotein reductase] + H2O + 2 H(+). The protein operates within steroid metabolism; ergosterol biosynthesis. Functionally, together with cyp51A and cyp51C, encodes the sterol 14alpha-demethylase that plays a critical role in the third module of ergosterol biosynthesis pathway, being ergosterol the major sterol component in fungal membranes that participates in a variety of functions. Essential for ascospore production. The third module or late pathway involves the ergosterol synthesis itself through consecutive reactions that mainly occur in the endoplasmic reticulum (ER) membrane. In filamentous fungi, during the initial step of this module, lanosterol (lanosta-8,24-dien-3beta-ol) can be metabolized to eburicol. Sterol 14alpha-demethylase catalyzes the three-step oxidative removal of the 14alpha-methyl group (C-32) of both these sterols in the form of formate, and converts eburicol and lanosterol to 14-demethyleburicol (4,4,24-trimethylergosta-8,14,24(28)-trienol) and 4,4-dimethyl-5alpha-cholesta-8,14,24-trien-3beta-ol, respectively, which are further metabolized by other enzymes in the pathway to ergosterol. Can also use substrates not intrinsic to fungi, such as 24,25-dihydrolanosterol (DHL), producing 4,4'-dimethyl-8,14-cholestadien-3-beta-ol, but at lower rates than the endogenous substrates. The chain is Sterol 14-alpha demethylase CYP51A from Gibberella zeae (strain ATCC MYA-4620 / CBS 123657 / FGSC 9075 / NRRL 31084 / PH-1) (Wheat head blight fungus).